Reading from the N-terminus, the 405-residue chain is Serine/threonine transporter SstT (405 aa).

9 consecutive transmembrane segments (helical) span residues Gly-13 to Ser-33, Ile-43 to Val-63, Ile-81 to Phe-101, Ala-140 to Leu-160, Phe-191 to Gly-211, Leu-215 to Val-235, Met-297 to Ile-317, Ala-338 to Ile-358, and Ile-362 to Thr-382.

It belongs to the dicarboxylate/amino acid:cation symporter (DAACS) (TC 2.A.23) family.

The protein localises to the cell inner membrane. The catalysed reaction is L-serine(in) + Na(+)(in) = L-serine(out) + Na(+)(out). It carries out the reaction L-threonine(in) + Na(+)(in) = L-threonine(out) + Na(+)(out). Involved in the import of serine and threonine into the cell, with the concomitant import of sodium (symport system). This chain is Serine/threonine transporter SstT, found in Vibrio cholerae serotype O1 (strain ATCC 39315 / El Tor Inaba N16961).